The chain runs to 204 residues: Large ribosomal subunit protein uL3c (204 aa).

A disordered region spans residues His126–Val155.

This sequence belongs to the universal ribosomal protein uL3 family. In terms of assembly, part of the 50S ribosomal subunit.

The protein localises to the plastid. The protein resides in the chloroplast. In terms of biological role, one of the primary rRNA binding proteins, it binds directly near the 3'-end of the 23S rRNA, where it nucleates assembly of the 50S subunit. In Guillardia theta (Cryptophyte), this protein is Large ribosomal subunit protein uL3c (rpl3).